A 174-amino-acid polypeptide reads, in one-letter code: MMRVIILLLTLHVLGVSSVMSLKKKIDGPWQTIYLAASTMEKINEGSPLRTYFRHILCGRRCNQVYLYFFIKKGTKCQLYKVIGRKKQEVYYAQYEGSIAFMLKMVNEKILLFHYFNKNRRNDVTRVAGVLAKGKQLNKEEMTEFMNLVEEMGIEEENVQRIMDTDNCPSKIKP.

The N-terminal stretch at methionine 1 to serine 18 is a signal peptide. An intrachain disulfide couples cysteine 77 to cysteine 168.

This sequence belongs to the calycin superfamily. Lipocalin family.

The protein resides in the secreted. The sequence is that of Probasin (Pbsn) from Mus musculus (Mouse).